A 259-amino-acid polypeptide reads, in one-letter code: Global transcriptional regulator CodY (259 aa).

The interval 1–155 (MTLLEKTRKI…GGTVVGMEIL (155 aa)) is GAF domain. Positions 203–222 (ASKIADRVGITRSVIVNALR) form a DNA-binding region, H-T-H motif.

It belongs to the CodY family.

Its subcellular location is the cytoplasm. Its function is as follows. DNA-binding global transcriptional regulator which is involved in the adaptive response to starvation and acts by directly or indirectly controlling the expression of numerous genes in response to nutrient availability. During rapid exponential growth, CodY is highly active and represses genes whose products allow adaptation to nutrient depletion. The polypeptide is Global transcriptional regulator CodY (Listeria welshimeri serovar 6b (strain ATCC 35897 / DSM 20650 / CCUG 15529 / CIP 8149 / NCTC 11857 / SLCC 5334 / V8)).